A 198-amino-acid polypeptide reads, in one-letter code: Charged multivesicular body protein 2a homolog 2 (198 aa).

Positions 11-42 form a coiled coil; it reads KEVLRENQRNLNKSMREIDRERVALQNQEKKI.

It belongs to the SNF7 family. As to quaternary structure, probable core component of the endosomal sorting required for transport complex III (ESCRT-III). ESCRT-III components are thought to multimerize to form a flat lattice on the perimeter membrane of the endosome.

It is found in the endosome membrane. Its function is as follows. Probable core component of the endosomal sorting required for transport complex III (ESCRT-III) which is involved in multivesicular bodies (MVBs) formation and sorting of endosomal cargo proteins into MVBs. MVBs contain intraluminal vesicles (ILVs) that are generated by invagination and scission from the limiting membrane of the endosome and are delivered to lysosomes enabling degradation of membrane proteins. The protein is Charged multivesicular body protein 2a homolog 2 (chmp2a2) of Dictyostelium discoideum (Social amoeba).